Reading from the N-terminus, the 217-residue chain is Superoxide dismutase [Mn], mitochondrial (217 aa).

The N-terminal 17 residues, 1–17 (MFVARKISPNCKPGVRG), are a transit peptide targeting the mitochondrion. Mn(2+)-binding residues include histidine 43, histidine 91, aspartate 175, and histidine 179.

This sequence belongs to the iron/manganese superoxide dismutase family. In terms of assembly, homotetramer. Mn(2+) is required as a cofactor.

It is found in the mitochondrion matrix. It catalyses the reaction 2 superoxide + 2 H(+) = H2O2 + O2. Destroys superoxide anion radicals which are normally produced within the cells and which are toxic to biological systems. The protein is Superoxide dismutase [Mn], mitochondrial (Sod2) of Drosophila melanogaster (Fruit fly).